A 214-amino-acid chain; its full sequence is 2-phospho-L-lactate guanylyltransferase (214 aa).

Belongs to the CofC family. As to quaternary structure, homodimer.

The enzyme catalyses (2S)-2-phospholactate + GTP + H(+) = (2S)-lactyl-2-diphospho-5'-guanosine + diphosphate. It functions in the pathway cofactor biosynthesis; coenzyme F420 biosynthesis. Functionally, guanylyltransferase that catalyzes the activation of (2S)-2-phospholactate (2-PL) as (2S)-lactyl-2-diphospho-5'-guanosine, via the condensation of 2-PL with GTP. It is involved in the biosynthesis of coenzyme F420, a hydride carrier cofactor. The protein is 2-phospho-L-lactate guanylyltransferase of Methanoregula boonei (strain DSM 21154 / JCM 14090 / 6A8).